The sequence spans 515 residues: Na(+)/H(+) antiporter NhaB (515 aa).

A run of 11 helical transmembrane segments spans residues 23 to 43 (LAIIIFLIINPLIFFFINPFV), 45 to 65 (GWLLVIEFIFTLAMALKCYPL), 96 to 116 (VVLLLIFMVAGIYFMKQLLLF), 136 to 156 (CLASAFLSAFLDALTVIAVVI), 204 to 224 (LMMHAGVGTALGGVMTMVGEP), 245 to 265 (APITLPVFICGLLVCFLVEHF), 305 to 325 (ALIGIWLIVALAFHLAEVGLI), 349 to 369 (FEEALPFTALLTVFFSIVAVI), 393 to 413 (LFYLFNGLLSSVSDNVFVGTV), 449 to 469 (ATPNGQAAFLFLLTSTLSPLI), and 480 to 500 (ALPYTIVMTLVGLLCVEFLLI).

Belongs to the NhaB Na(+)/H(+) (TC 2.A.34) antiporter family.

It localises to the cell inner membrane. It catalyses the reaction 2 Na(+)(in) + 3 H(+)(out) = 2 Na(+)(out) + 3 H(+)(in). Na(+)/H(+) antiporter that extrudes sodium in exchange for external protons. This chain is Na(+)/H(+) antiporter NhaB, found in Photorhabdus laumondii subsp. laumondii (strain DSM 15139 / CIP 105565 / TT01) (Photorhabdus luminescens subsp. laumondii).